Consider the following 287-residue polypeptide: Protease HtpX homolog (287 aa).

2 helical membrane-spanning segments follow: residues 5 to 25 (IRTG…GYWI) and 28 to 48 (GAGA…AYWV). Residue H131 coordinates Zn(2+). E132 is a catalytic residue. Position 135 (H135) interacts with Zn(2+). 2 helical membrane passes run 146 to 166 (VTAT…FFGG) and 174 to 194 (PFAG…ATLV). Residue E203 coordinates Zn(2+).

It belongs to the peptidase M48B family. It depends on Zn(2+) as a cofactor.

It localises to the cell inner membrane. The polypeptide is Protease HtpX homolog (Acidiphilium cryptum (strain JF-5)).